We begin with the raw amino-acid sequence, 251 residues long: WUSCHEL-related homeobox 4 (251 aa).

Disordered stretches follow at residues 1-21 and 33-93; these read MKVHEFSNGFSSSWDQHDSTS and LAPK…RWNP. Low complexity predominate over residues 11–21; the sequence is SSSWDQHDSTS. Basic and acidic residues predominate over residues 71–83; it reads KFEHKRDPPHQLE. Positions 86–150 form a DNA-binding region, homeobox; WUS-type; that stretch reads PGGTRWNPTQ…NHKARERQKQ (65 aa).

This sequence belongs to the WUS homeobox family. In terms of tissue distribution, expressed in the vasculature of the whole plant (roots, hypocotyls, cotyledons and leaves), trichomes and stomata. Expresse in the developing vascular bundles of root and shoot lateral organs.

Its subcellular location is the nucleus. In terms of biological role, promotes differentiation and/or maintenance of the vascular procambium, the initial cells of the developing vasculature. Part of the TDIF-TDR-WOX4 signaling pathway that plays a crucial role in the maintenance of the vascular meristem organization during secondary growth. Is required for promoting the proliferation of procambial/cambial stem cells but not for repressing their commitment to xylem differentiation in response to the TDIF signal. Acts redundantly with WOX14 downstream of the TDR/PXY receptor kinase to regulate procambial cell proliferation and differentiation in vascular tissue, independently of any role in vascular. Acts as a cambium regulator in the inflorescence stem. Is required for auxin-dependent cambium stimulation in the inflorescence stem. This chain is WUSCHEL-related homeobox 4 (WOX4), found in Arabidopsis thaliana (Mouse-ear cress).